The following is a 151-amino-acid chain: UPF0178 protein VSAL_I0701 (151 aa).

This sequence belongs to the UPF0178 family.

In Aliivibrio salmonicida (strain LFI1238) (Vibrio salmonicida (strain LFI1238)), this protein is UPF0178 protein VSAL_I0701.